A 602-amino-acid chain; its full sequence is Type II restriction enzyme StsI (602 aa).

It carries out the reaction Endonucleolytic cleavage of DNA to give specific double-stranded fragments with terminal 5'-phosphates.. Its function is as follows. An S subtype restriction enzyme that recognizes the double-stranded sequences 5'-GGATG-3' and 3'-CATCC-5' and cleaves respectively 15 bases after G-1 and 14 bases before C-1. In Streptococcus sanguinis, this protein is Type II restriction enzyme StsI (stsIR).